The following is a 237-amino-acid chain: Protein XpsM (237 aa).

Residues 1–21 (MPAATWTASPSPPNWPVPMPR) form a disordered region. A compositionally biased stretch (pro residues) spans 10–21 (PSPPNWPVPMPR).

The chain is Protein XpsM (xpsM) from Xanthomonas campestris pv. campestris (strain ATCC 33913 / DSM 3586 / NCPPB 528 / LMG 568 / P 25).